The following is a 127-amino-acid chain: Calcitonin receptor-stimulating peptide 1 (127 aa).

The N-terminal stretch at Met-1–Ala-25 is a signal peptide. A propeptide spanning residues Ala-26 to Gln-79 is cleaved from the precursor. A disulfide bridge links Cys-83 with Cys-88.

Belongs to the calcitonin family.

Its subcellular location is the secreted. Functionally, stimulates cAMP production in porcine kidney cell line LLC-PK1 via the calcitonin receptor (CT) but not via the CT-like (CL) receptor. This Canis lupus familiaris (Dog) protein is Calcitonin receptor-stimulating peptide 1 (CRSP1).